A 689-amino-acid polypeptide reads, in one-letter code: DNA ligase (689 aa).

NAD(+)-binding positions include 58 to 62 (DQEYD), 107 to 108 (SL), and E138. K140 (N6-AMP-lysine intermediate) is an active-site residue. R161, E198, K314, and K338 together coordinate NAD(+). 4 residues coordinate Zn(2+): C432, C435, C448, and C453. Residues 611–689 (ASSGTLSGKT…QELLEMLHGG (79 aa)) enclose the BRCT domain.

Belongs to the NAD-dependent DNA ligase family. LigA subfamily. It depends on Mg(2+) as a cofactor. Mn(2+) is required as a cofactor.

It carries out the reaction NAD(+) + (deoxyribonucleotide)n-3'-hydroxyl + 5'-phospho-(deoxyribonucleotide)m = (deoxyribonucleotide)n+m + AMP + beta-nicotinamide D-nucleotide.. Its function is as follows. DNA ligase that catalyzes the formation of phosphodiester linkages between 5'-phosphoryl and 3'-hydroxyl groups in double-stranded DNA using NAD as a coenzyme and as the energy source for the reaction. It is essential for DNA replication and repair of damaged DNA. The protein is DNA ligase of Methylacidiphilum infernorum (isolate V4) (Methylokorus infernorum (strain V4)).